The sequence spans 64 residues: Large ribosomal subunit protein bL35 (64 aa).

The protein belongs to the bacterial ribosomal protein bL35 family.

This chain is Large ribosomal subunit protein bL35, found in Shewanella halifaxensis (strain HAW-EB4).